Here is a 195-residue protein sequence, read N- to C-terminus: Peptidyl-tRNA hydrolase (195 aa).

Residue tyrosine 17 coordinates tRNA. Histidine 22 serves as the catalytic Proton acceptor. TRNA contacts are provided by phenylalanine 68, asparagine 70, and asparagine 116.

The protein belongs to the PTH family. In terms of assembly, monomer.

It is found in the cytoplasm. The catalysed reaction is an N-acyl-L-alpha-aminoacyl-tRNA + H2O = an N-acyl-L-amino acid + a tRNA + H(+). Hydrolyzes ribosome-free peptidyl-tRNAs (with 1 or more amino acids incorporated), which drop off the ribosome during protein synthesis, or as a result of ribosome stalling. In terms of biological role, catalyzes the release of premature peptidyl moieties from peptidyl-tRNA molecules trapped in stalled 50S ribosomal subunits, and thus maintains levels of free tRNAs and 50S ribosomes. The chain is Peptidyl-tRNA hydrolase from Pectobacterium atrosepticum (strain SCRI 1043 / ATCC BAA-672) (Erwinia carotovora subsp. atroseptica).